The following is a 360-amino-acid chain: GTPase Obg (360 aa).

Residues 1 to 156 (MFVDSVEIII…KCVRLELKLI (156 aa)) enclose the Obg domain. Positions 157-360 (ADIGLVGFPN…LKFVLLKALQ (204 aa)) constitute an OBG-type G domain. GTP contacts are provided by residues 163-170 (GFPNAGKS), 188-192 (FTTLV), 210-213 (DIPG), 279-282 (NKCD), and 341-343 (SAV). Positions 170 and 190 each coordinate Mg(2+).

It belongs to the TRAFAC class OBG-HflX-like GTPase superfamily. OBG GTPase family. Monomer. The cofactor is Mg(2+).

The protein resides in the cytoplasm. An essential GTPase which binds GTP, GDP and possibly (p)ppGpp with moderate affinity, with high nucleotide exchange rates and a fairly low GTP hydrolysis rate. Plays a role in control of the cell cycle, stress response, ribosome biogenesis and in those bacteria that undergo differentiation, in morphogenesis control. The polypeptide is GTPase Obg (Helicobacter pylori (strain J99 / ATCC 700824) (Campylobacter pylori J99)).